A 530-amino-acid polypeptide reads, in one-letter code: Chitin synthase 1 (530 aa).

Asn-17 is a glycosylation site (N-linked (GlcNAc...) asparagine). The disordered stretch occupies residues 22-94 (QESSSNLIQQ…QANNNRKVTR (73 aa)). A compositionally biased stretch (polar residues) spans 24 to 56 (SSSNLIQQQQPGTNYARNQQTLSSLRSQKQQAE). N-linked (GlcNAc...) asparagine glycans are attached at residues Asn-118, Asn-310, and Asn-474. 2 helical membrane-spanning segments follow: residues 477 to 497 (FFAG…GHGF) and 508 to 528 (IYNV…LSFL).

This sequence belongs to the chitin synthase family. Class II subfamily.

The protein resides in the cell membrane. It catalyses the reaction [(1-&gt;4)-N-acetyl-beta-D-glucosaminyl](n) + UDP-N-acetyl-alpha-D-glucosamine = [(1-&gt;4)-N-acetyl-beta-D-glucosaminyl](n+1) + UDP + H(+). Polymerizes chitin, a structural polymer of the cell wall and septum, by transferring the sugar moiety of UDP-GlcNAc to the non-reducing end of the growing chitin polymer. This is Chitin synthase 1 from Rhizopus delemar (strain RA 99-880 / ATCC MYA-4621 / FGSC 9543 / NRRL 43880) (Mucormycosis agent).